Consider the following 214-residue polypeptide: Pyridoxine/pyridoxamine 5'-phosphate oxidase (214 aa).

Residues 8–11 and Lys-66 contribute to the substrate site; that span reads RTNY. FMN is bound by residues 61-66, 76-77, Arg-82, Lys-83, and Gln-105; these read RIVLIK and FT. The substrate site is built by Tyr-123, Arg-127, and Ser-131. FMN contacts are provided by residues 140-141 and Trp-184; that span reads QS. A substrate-binding site is contributed by 190 to 192; it reads RLH. Arg-194 lines the FMN pocket.

The protein belongs to the pyridoxamine 5'-phosphate oxidase family. In terms of assembly, homodimer. FMN is required as a cofactor.

It carries out the reaction pyridoxamine 5'-phosphate + O2 + H2O = pyridoxal 5'-phosphate + H2O2 + NH4(+). The enzyme catalyses pyridoxine 5'-phosphate + O2 = pyridoxal 5'-phosphate + H2O2. It functions in the pathway cofactor metabolism; pyridoxal 5'-phosphate salvage; pyridoxal 5'-phosphate from pyridoxamine 5'-phosphate: step 1/1. Its pathway is cofactor metabolism; pyridoxal 5'-phosphate salvage; pyridoxal 5'-phosphate from pyridoxine 5'-phosphate: step 1/1. Catalyzes the oxidation of either pyridoxine 5'-phosphate (PNP) or pyridoxamine 5'-phosphate (PMP) into pyridoxal 5'-phosphate (PLP). The chain is Pyridoxine/pyridoxamine 5'-phosphate oxidase from Burkholderia mallei (strain NCTC 10247).